We begin with the raw amino-acid sequence, 156 residues long: ATP synthase subunit b', organellar chromatophore (156 aa).

The chain crosses the membrane as a helical span at residues 23 to 43 (TLPLMAIQVVFLTFILNAIFF).

This sequence belongs to the ATPase B chain family. As to quaternary structure, F-type ATPases have 2 components, F(1) - the catalytic core - and F(0) - the membrane proton channel. F(1) has five subunits: alpha(3), beta(3), gamma(1), delta(1), epsilon(1). F(0) has four main subunits: a(1), b(1), b'(1) and c(10-14). The alpha and beta chains form an alternating ring which encloses part of the gamma chain. F(1) is attached to F(0) by a central stalk formed by the gamma and epsilon chains, while a peripheral stalk is formed by the delta, b and b' chains.

It is found in the plastid. The protein resides in the organellar chromatophore thylakoid membrane. Functionally, f(1)F(0) ATP synthase produces ATP from ADP in the presence of a proton or sodium gradient. F-type ATPases consist of two structural domains, F(1) containing the extramembraneous catalytic core and F(0) containing the membrane proton channel, linked together by a central stalk and a peripheral stalk. During catalysis, ATP synthesis in the catalytic domain of F(1) is coupled via a rotary mechanism of the central stalk subunits to proton translocation. Its function is as follows. Component of the F(0) channel, it forms part of the peripheral stalk, linking F(1) to F(0). The b'-subunit is a diverged and duplicated form of b found in plants and photosynthetic bacteria. This Paulinella chromatophora protein is ATP synthase subunit b', organellar chromatophore.